Reading from the N-terminus, the 401-residue chain is Large ribosomal subunit protein uL3 (401 aa).

A disordered region spans residues 1–21; sequence MSHRKFSAPRHGHMGFTPKKR.

The protein belongs to the universal ribosomal protein uL3 family.

It is found in the cytoplasm. Functionally, the L3 protein is a component of the large subunit of cytoplasmic ribosomes. In Caenorhabditis briggsae, this protein is Large ribosomal subunit protein uL3 (rpl-3).